A 954-amino-acid polypeptide reads, in one-letter code: Glycine dehydrogenase (decarboxylating) (954 aa).

The residue at position 704 (K704) is an N6-(pyridoxal phosphate)lysine.

It belongs to the GcvP family. In terms of assembly, the glycine cleavage system is composed of four proteins: P, T, L and H. Pyridoxal 5'-phosphate is required as a cofactor.

It carries out the reaction N(6)-[(R)-lipoyl]-L-lysyl-[glycine-cleavage complex H protein] + glycine + H(+) = N(6)-[(R)-S(8)-aminomethyldihydrolipoyl]-L-lysyl-[glycine-cleavage complex H protein] + CO2. Functionally, the glycine cleavage system catalyzes the degradation of glycine. The P protein binds the alpha-amino group of glycine through its pyridoxal phosphate cofactor; CO(2) is released and the remaining methylamine moiety is then transferred to the lipoamide cofactor of the H protein. This chain is Glycine dehydrogenase (decarboxylating), found in Agrobacterium fabrum (strain C58 / ATCC 33970) (Agrobacterium tumefaciens (strain C58)).